Consider the following 142-residue polypeptide: HTH-type transcriptional regulator MntR (142 aa).

The HTH dtxR-type domain occupies 1–63 (MPTPSMEDYI…YEKYRGLVLT (63 aa)). Mn(2+) contacts are provided by Asp8, Glu11, His77, Glu99, Glu102, and His103.

It belongs to the DtxR/MntR family. In terms of assembly, homodimer.

It is found in the cytoplasm. With respect to regulation, DNA binding is strongly activated by Mn(2+). In terms of biological role, central regulator of manganese homeostasis. This is HTH-type transcriptional regulator MntR from Bacillus cereus (strain G9842).